We begin with the raw amino-acid sequence, 279 residues long: ATP synthase gamma chain (279 aa).

This sequence belongs to the ATPase gamma chain family. F-type ATPases have 2 components, CF(1) - the catalytic core - and CF(0) - the membrane proton channel. CF(1) has five subunits: alpha(3), beta(3), gamma(1), delta(1), epsilon(1). CF(0) has three main subunits: a, b and c.

Its subcellular location is the cell membrane. Its function is as follows. Produces ATP from ADP in the presence of a proton gradient across the membrane. The gamma chain is believed to be important in regulating ATPase activity and the flow of protons through the CF(0) complex. The chain is ATP synthase gamma chain from Mycoplasma genitalium (strain ATCC 33530 / DSM 19775 / NCTC 10195 / G37) (Mycoplasmoides genitalium).